The sequence spans 224 residues: Ribose-5-phosphate isomerase A (224 aa).

Substrate is bound by residues 26–29 (TGST), 82–85 (DGAD), and 95–98 (KGGG). The active-site Proton acceptor is glutamate 104. Substrate is bound at residue lysine 122.

It belongs to the ribose 5-phosphate isomerase family. Homodimer.

It carries out the reaction aldehydo-D-ribose 5-phosphate = D-ribulose 5-phosphate. Its pathway is carbohydrate degradation; pentose phosphate pathway; D-ribose 5-phosphate from D-ribulose 5-phosphate (non-oxidative stage): step 1/1. Functionally, catalyzes the reversible conversion of ribose-5-phosphate to ribulose 5-phosphate. In Streptococcus suis (strain 98HAH33), this protein is Ribose-5-phosphate isomerase A.